A 256-amino-acid polypeptide reads, in one-letter code: Thiazole synthase (256 aa).

Lys96 (schiff-base intermediate with DXP) is an active-site residue. 1-deoxy-D-xylulose 5-phosphate contacts are provided by residues Gly157, 183–184 (AG), and 205–206 (NT).

This sequence belongs to the ThiG family. In terms of assembly, homotetramer. Forms heterodimers with either ThiH or ThiS.

The protein localises to the cytoplasm. The enzyme catalyses [ThiS sulfur-carrier protein]-C-terminal-Gly-aminoethanethioate + 2-iminoacetate + 1-deoxy-D-xylulose 5-phosphate = [ThiS sulfur-carrier protein]-C-terminal Gly-Gly + 2-[(2R,5Z)-2-carboxy-4-methylthiazol-5(2H)-ylidene]ethyl phosphate + 2 H2O + H(+). The protein operates within cofactor biosynthesis; thiamine diphosphate biosynthesis. Catalyzes the rearrangement of 1-deoxy-D-xylulose 5-phosphate (DXP) to produce the thiazole phosphate moiety of thiamine. Sulfur is provided by the thiocarboxylate moiety of the carrier protein ThiS. In vitro, sulfur can be provided by H(2)S. This chain is Thiazole synthase, found in Bacillus cereus (strain 03BB102).